The chain runs to 61 residues: uncharacterized protein (61 aa).

Residues 1-20 (MSSTTSTINLSSLGSAINDV) are Extracellular-facing. A helical membrane pass occupies residues 21–41 (LNIIVQYLPVFVTVAVLFGII). At 42-61 (TYMTGGLGGLFSGITGIFGS) the chain is on the cytoplasmic side.

Its subcellular location is the host membrane. This is an uncharacterized protein from Acidianus filamentous virus 2 (isolate Italy/Pozzuoli) (AFV-2).